A 136-amino-acid polypeptide reads, in one-letter code: Large ribosomal subunit protein uL16c (136 aa).

Positions 1 to 20 (MLSPKRTRFRKQHRGRMKGK) are disordered.

Belongs to the universal ribosomal protein uL16 family. As to quaternary structure, part of the 50S ribosomal subunit.

Its subcellular location is the plastid. It localises to the chloroplast. In Triticum aestivum (Wheat), this protein is Large ribosomal subunit protein uL16c.